The sequence spans 119 residues: Large ribosomal subunit protein uL22 (119 aa).

Belongs to the universal ribosomal protein uL22 family. Part of the 50S ribosomal subunit.

In terms of biological role, this protein binds specifically to 23S rRNA; its binding is stimulated by other ribosomal proteins, e.g. L4, L17, and L20. It is important during the early stages of 50S assembly. It makes multiple contacts with different domains of the 23S rRNA in the assembled 50S subunit and ribosome. Functionally, the globular domain of the protein is located near the polypeptide exit tunnel on the outside of the subunit, while an extended beta-hairpin is found that lines the wall of the exit tunnel in the center of the 70S ribosome. This Rhodopirellula baltica (strain DSM 10527 / NCIMB 13988 / SH1) protein is Large ribosomal subunit protein uL22.